The primary structure comprises 156 residues: Protein-export protein SecB (156 aa).

This sequence belongs to the SecB family. Homotetramer, a dimer of dimers. One homotetramer interacts with 1 SecA dimer.

Its subcellular location is the cytoplasm. In terms of biological role, one of the proteins required for the normal export of preproteins out of the cell cytoplasm. It is a molecular chaperone that binds to a subset of precursor proteins, maintaining them in a translocation-competent state. It also specifically binds to its receptor SecA. This Aeromonas hydrophila subsp. hydrophila (strain ATCC 7966 / DSM 30187 / BCRC 13018 / CCUG 14551 / JCM 1027 / KCTC 2358 / NCIMB 9240 / NCTC 8049) protein is Protein-export protein SecB.